A 256-amino-acid polypeptide reads, in one-letter code: Thiazole synthase (256 aa).

Lys95 acts as the Schiff-base intermediate with DXP in catalysis. 1-deoxy-D-xylulose 5-phosphate-binding positions include Gly156, 182 to 183 (AG), and 204 to 205 (NT).

This sequence belongs to the ThiG family. Homotetramer. Forms heterodimers with either ThiH or ThiS.

The protein localises to the cytoplasm. It catalyses the reaction [ThiS sulfur-carrier protein]-C-terminal-Gly-aminoethanethioate + 2-iminoacetate + 1-deoxy-D-xylulose 5-phosphate = [ThiS sulfur-carrier protein]-C-terminal Gly-Gly + 2-[(2R,5Z)-2-carboxy-4-methylthiazol-5(2H)-ylidene]ethyl phosphate + 2 H2O + H(+). The protein operates within cofactor biosynthesis; thiamine diphosphate biosynthesis. Catalyzes the rearrangement of 1-deoxy-D-xylulose 5-phosphate (DXP) to produce the thiazole phosphate moiety of thiamine. Sulfur is provided by the thiocarboxylate moiety of the carrier protein ThiS. In vitro, sulfur can be provided by H(2)S. The polypeptide is Thiazole synthase (Klebsiella pneumoniae (strain 342)).